The primary structure comprises 305 residues: Carbamate kinase (305 aa).

The protein belongs to the carbamate kinase family.

The protein resides in the cytoplasm. It catalyses the reaction hydrogencarbonate + NH4(+) + ATP = carbamoyl phosphate + ADP + H2O + H(+). The protein operates within metabolic intermediate metabolism; carbamoyl phosphate degradation; CO(2) and NH(3) from carbamoyl phosphate: step 1/1. The sequence is that of Carbamate kinase (arcC) from Thermoplasma acidophilum (strain ATCC 25905 / DSM 1728 / JCM 9062 / NBRC 15155 / AMRC-C165).